We begin with the raw amino-acid sequence, 259 residues long: MGRGKIEIKRIENSTNRQVTFSKRRGGLLKKANELAVLCDARVGVVIFSSTGKMFEYCSPACSLRELIEQYQHATNSHFEEINHDQQILLEMTRMKNEMEKLETGIRRYTGDDLSSLTLDDVSDLEQQLEYSVSKVRARKHQLLNQQLDNLRRKEQILEDQNTFLYRMINENQQAALTGEVKLGEMAPLAMLQPPPAFAHSATAYYGGESSSSGTALQLMSAAPQLHADDLGFRLQPTQPNLQDPAAPCGGLHGHGLQL.

The region spanning 1 to 61 (MGRGKIEIKR…GKMFEYCSPA (61 aa)) is the MADS-box domain. Residues 85–175 (DQQILLEMTR…YRMINENQQA (91 aa)) enclose the K-box domain. Residues 237 to 259 (PTQPNLQDPAAPCGGLHGHGLQL) are disordered.

In terms of tissue distribution, strong expression in female inflorescences (ears), but also weak expression in male inflorescences (tassels). At early stages of the development of the female spiklet, expressed in all organ primordia but later restricted to the ovule and the developing silk. At very late stages of development, expression becomes restricted to parts of the silk.

It localises to the nucleus. In terms of biological role, probable transcription factor. In Zea mays (Maize), this protein is MADS-box protein ZMM17 (M17).